We begin with the raw amino-acid sequence, 254 residues long: 3-deoxy-manno-octulosonate cytidylyltransferase (254 aa).

The protein belongs to the KdsB family.

Its subcellular location is the cytoplasm. It catalyses the reaction 3-deoxy-alpha-D-manno-oct-2-ulosonate + CTP = CMP-3-deoxy-beta-D-manno-octulosonate + diphosphate. The protein operates within nucleotide-sugar biosynthesis; CMP-3-deoxy-D-manno-octulosonate biosynthesis; CMP-3-deoxy-D-manno-octulosonate from 3-deoxy-D-manno-octulosonate and CTP: step 1/1. Its pathway is bacterial outer membrane biogenesis; lipopolysaccharide biosynthesis. Functionally, activates KDO (a required 8-carbon sugar) for incorporation into bacterial lipopolysaccharide in Gram-negative bacteria. The chain is 3-deoxy-manno-octulosonate cytidylyltransferase from Polynucleobacter necessarius subsp. necessarius (strain STIR1).